The chain runs to 333 residues: 1D-myo-inositol 2-acetamido-2-deoxy-alpha-D-glucopyranoside deacetylase (333 aa).

His-18, Asp-21, and His-165 together coordinate Zn(2+).

Belongs to the MshB deacetylase family. Zn(2+) is required as a cofactor.

The catalysed reaction is 1D-myo-inositol 2-acetamido-2-deoxy-alpha-D-glucopyranoside + H2O = 1D-myo-inositol 2-amino-2-deoxy-alpha-D-glucopyranoside + acetate. Its function is as follows. Catalyzes the deacetylation of 1D-myo-inositol 2-acetamido-2-deoxy-alpha-D-glucopyranoside (GlcNAc-Ins) in the mycothiol biosynthesis pathway. The chain is 1D-myo-inositol 2-acetamido-2-deoxy-alpha-D-glucopyranoside deacetylase from Corynebacterium jeikeium (strain K411).